The primary structure comprises 128 residues: Fluoride-specific ion channel FluC (128 aa).

4 consecutive transmembrane segments (helical) span residues 5–25 (IVAI…LSLA), 35–55 (LGTL…AVVF), 67–87 (LFVI…SVEV), and 96–116 (FGWA…LTAL). Na(+) is bound by residues G75 and T78.

Belongs to the fluoride channel Fluc/FEX (TC 1.A.43) family.

The protein localises to the cell inner membrane. It catalyses the reaction fluoride(in) = fluoride(out). Its activity is regulated as follows. Na(+) is not transported, but it plays an essential structural role and its presence is essential for fluoride channel function. In terms of biological role, fluoride-specific ion channel. Important for reducing fluoride concentration in the cell, thus reducing its toxicity. This Burkholderia orbicola (strain MC0-3) protein is Fluoride-specific ion channel FluC.